A 252-amino-acid polypeptide reads, in one-letter code: Geranylgeranylglyceryl phosphate synthase (252 aa).

Residues aspartate 26 and serine 55 each contribute to the Mg(2+) site. Residues 174–180, 205–206, and 227–228 contribute to the sn-glycerol 1-phosphate site; these read YLEAGSG, GG, and GT.

This sequence belongs to the GGGP/HepGP synthase family. Group II subfamily. Mg(2+) serves as cofactor.

It localises to the cytoplasm. It catalyses the reaction sn-glycerol 1-phosphate + (2E,6E,10E)-geranylgeranyl diphosphate = sn-3-O-(geranylgeranyl)glycerol 1-phosphate + diphosphate. The protein operates within membrane lipid metabolism; glycerophospholipid metabolism. In terms of biological role, prenyltransferase that catalyzes the transfer of the geranylgeranyl moiety of geranylgeranyl diphosphate (GGPP) to the C3 hydroxyl of sn-glycerol-1-phosphate (G1P). This reaction is the first ether-bond-formation step in the biosynthesis of archaeal membrane lipids. This is Geranylgeranylglyceryl phosphate synthase from Thermococcus gammatolerans (strain DSM 15229 / JCM 11827 / EJ3).